The sequence spans 274 residues: Serine acetyltransferase (274 aa).

This sequence belongs to the transferase hexapeptide repeat family.

The protein localises to the cytoplasm. The catalysed reaction is L-serine + acetyl-CoA = O-acetyl-L-serine + CoA. Its pathway is amino-acid biosynthesis; L-cysteine biosynthesis; L-cysteine from L-serine: step 1/2. This chain is Serine acetyltransferase (cysE), found in Buchnera aphidicola subsp. Acyrthosiphon pisum (strain APS) (Acyrthosiphon pisum symbiotic bacterium).